We begin with the raw amino-acid sequence, 173 residues long: Crossover junction endodeoxyribonuclease RuvC (173 aa).

Active-site residues include Asp8, Glu67, and Asp139. Positions 8, 67, and 139 each coordinate Mg(2+).

The protein belongs to the RuvC family. In terms of assembly, homodimer which binds Holliday junction (HJ) DNA. The HJ becomes 2-fold symmetrical on binding to RuvC with unstacked arms; it has a different conformation from HJ DNA in complex with RuvA. In the full resolvosome a probable DNA-RuvA(4)-RuvB(12)-RuvC(2) complex forms which resolves the HJ. Mg(2+) is required as a cofactor.

The protein localises to the cytoplasm. The enzyme catalyses Endonucleolytic cleavage at a junction such as a reciprocal single-stranded crossover between two homologous DNA duplexes (Holliday junction).. In terms of biological role, the RuvA-RuvB-RuvC complex processes Holliday junction (HJ) DNA during genetic recombination and DNA repair. Endonuclease that resolves HJ intermediates. Cleaves cruciform DNA by making single-stranded nicks across the HJ at symmetrical positions within the homologous arms, yielding a 5'-phosphate and a 3'-hydroxyl group; requires a central core of homology in the junction. The consensus cleavage sequence is 5'-(A/T)TT(C/G)-3'. Cleavage occurs on the 3'-side of the TT dinucleotide at the point of strand exchange. HJ branch migration catalyzed by RuvA-RuvB allows RuvC to scan DNA until it finds its consensus sequence, where it cleaves and resolves the cruciform DNA. This chain is Crossover junction endodeoxyribonuclease RuvC, found in Aliivibrio fischeri (strain ATCC 700601 / ES114) (Vibrio fischeri).